Reading from the N-terminus, the 64-residue chain is Conotoxin Cal6.24 (64 aa).

Positions 1-22 are cleaved as a signal peptide; it reads MKLTCVMIVAVLVLTVCKVVTS. 3 disulfide bridges follow: Cys32-Cys50, Cys40-Cys54, and Cys49-Cys60.

Expressed by the venom duct.

The protein localises to the secreted. In terms of biological role, probable neurotoxin. The sequence is that of Conotoxin Cal6.24 from Californiconus californicus (California cone).